Reading from the N-terminus, the 57-residue chain is Small ribosomal subunit protein bS21 (57 aa).

Belongs to the bacterial ribosomal protein bS21 family.

The protein is Small ribosomal subunit protein bS21 of Phytoplasma australiense.